A 447-amino-acid chain; its full sequence is Polyamine export protein (447 aa).

The Cytoplasmic portion of the chain corresponds to 1 to 4; that stretch reads MLNS. Positions 1-197 constitute a CNNM transmembrane domain; that stretch reads MLNSIFIIFC…ALAGVLRKQE (197 aa). Residues 5 to 25 form a helical membrane-spanning segment; sequence IFIIFCLIAVSAFFSISEISL. Topologically, residues 26 to 54 are periplasmic; the sequence is AASRKIKLKLLADEGSINAQRVLKMQENP. The helical transmembrane segment at 55-75 threads the bilayer; it reads GMFFTVVQIGLNAVAILGGIV. At 76-99 the chain is on the cytoplasmic side; that stretch reads GDAAFSPAFSALFSHYMSPELSEQ. The chain crosses the membrane as a helical span at residues 100 to 120; that stretch reads LSFILSFSLVTGLFILFADLT. Over 121–141 the chain is Periplasmic; it reads PKRIGMIAPEAVALRIINPMR. A helical transmembrane segment spans residues 142–162; sequence FCLFVFRPLVWLFNGMANNIF. At 163-447 the chain is on the cytoplasmic side; it reads RLFKIPMVRK…DAQGKEDSAA (285 aa). 2 CBS domains span residues 216-275 and 282-343; these read MTSR…NQSM and QIRN…GLEE.

The protein belongs to the UPF0053 family. PaeA subfamily.

Its subcellular location is the cell inner membrane. Involved in cadaverine and putrescine tolerance in stationary phase. May facilitate the efflux of both cadaverine and putrescine from the cytoplasm, reducing potentially toxic levels under certain stress conditions. This Salmonella typhimurium (strain 14028s / SGSC 2262) protein is Polyamine export protein.